The sequence spans 469 residues: Deoxyribodipyrimidine photo-lyase (469 aa).

Residues 1-133 (MRLVWFRRDL…IWSAFDDKCV (133 aa)) enclose the Photolyase/cryptochrome alpha/beta domain. E107 lines the (6R)-5,10-methylene-5,6,7,8-tetrahydrofolate pocket.

The protein belongs to the DNA photolyase class-1 family. In terms of assembly, monomer. FAD is required as a cofactor. The cofactor is (6R)-5,10-methylene-5,6,7,8-tetrahydrofolate.

It catalyses the reaction cyclobutadipyrimidine (in DNA) = 2 pyrimidine residues (in DNA).. In terms of biological role, involved in repair of UV radiation-induced DNA damage. Catalyzes the light-dependent monomerization (300-600 nm) of cyclobutyl pyrimidine dimers (in cis-syn configuration), which are formed between adjacent bases on the same DNA strand upon exposure to ultraviolet radiation. The polypeptide is Deoxyribodipyrimidine photo-lyase (phrA) (Vibrio cholerae serotype O1 (strain ATCC 39315 / El Tor Inaba N16961)).